The primary structure comprises 208 residues: Holliday junction branch migration complex subunit RuvA (208 aa).

Positions 1–67 are domain I; the sequence is MIGWLHGTIG…EDGQQLYGFE (67 aa). A domain II region spans residues 68 to 146; that stretch reads TKADRNLFRL…ERWQQQGGST (79 aa). A flexible linker region spans residues 147–157; the sequence is PLRLVEPVAES. The interval 157–208 is domain III; sequence SRELRATLEALGYGPEEVSAAVAQAGSQGLDPEQPMEEWLRHCLAWLSRQAG.

The protein belongs to the RuvA family. Homotetramer. Forms an RuvA(8)-RuvB(12)-Holliday junction (HJ) complex. HJ DNA is sandwiched between 2 RuvA tetramers; dsDNA enters through RuvA and exits via RuvB. An RuvB hexamer assembles on each DNA strand where it exits the tetramer. Each RuvB hexamer is contacted by two RuvA subunits (via domain III) on 2 adjacent RuvB subunits; this complex drives branch migration. In the full resolvosome a probable DNA-RuvA(4)-RuvB(12)-RuvC(2) complex forms which resolves the HJ.

It is found in the cytoplasm. Its function is as follows. The RuvA-RuvB-RuvC complex processes Holliday junction (HJ) DNA during genetic recombination and DNA repair, while the RuvA-RuvB complex plays an important role in the rescue of blocked DNA replication forks via replication fork reversal (RFR). RuvA specifically binds to HJ cruciform DNA, conferring on it an open structure. The RuvB hexamer acts as an ATP-dependent pump, pulling dsDNA into and through the RuvAB complex. HJ branch migration allows RuvC to scan DNA until it finds its consensus sequence, where it cleaves and resolves the cruciform DNA. The chain is Holliday junction branch migration complex subunit RuvA from Synechococcus sp. (strain RCC307).